Here is a 173-residue protein sequence, read N- to C-terminus: MQERINNCVTQVLAESAGTRGEGAYLIDIKVKGKGSGRKIEILMDADDGIRIHQCAYISRRVRERIEGDDDLLELVGENFDLMVSSPGLGEPIIIPRQYIRHVGKLLQVTYADSNGDPVELVGHLQEVSLLDEHGAKIVIMPEQKKKKGQQPKTEAVILYLNQVIRAIPEAEL.

The protein belongs to the RimP family.

It localises to the cytoplasm. Required for maturation of 30S ribosomal subunits. The protein is Ribosome maturation factor RimP of Pelodictyon phaeoclathratiforme (strain DSM 5477 / BU-1).